Consider the following 164-residue polypeptide: SsrA-binding protein (164 aa).

This sequence belongs to the SmpB family.

It is found in the cytoplasm. In terms of biological role, required for rescue of stalled ribosomes mediated by trans-translation. Binds to transfer-messenger RNA (tmRNA), required for stable association of tmRNA with ribosomes. tmRNA and SmpB together mimic tRNA shape, replacing the anticodon stem-loop with SmpB. tmRNA is encoded by the ssrA gene; the 2 termini fold to resemble tRNA(Ala) and it encodes a 'tag peptide', a short internal open reading frame. During trans-translation Ala-aminoacylated tmRNA acts like a tRNA, entering the A-site of stalled ribosomes, displacing the stalled mRNA. The ribosome then switches to translate the ORF on the tmRNA; the nascent peptide is terminated with the 'tag peptide' encoded by the tmRNA and targeted for degradation. The ribosome is freed to recommence translation, which seems to be the essential function of trans-translation. This is SsrA-binding protein from Synechococcus sp. (strain CC9311).